The chain runs to 81 residues: 8.6 kDa transglutaminase substrate (81 aa).

As to quaternary structure, multimeric. Hemolymph; Hemocyte.

The chain is 8.6 kDa transglutaminase substrate from Tachypleus tridentatus (Japanese horseshoe crab).